A 156-amino-acid polypeptide reads, in one-letter code: Small ribosomal subunit protein uS7 (156 aa).

Belongs to the universal ribosomal protein uS7 family. As to quaternary structure, part of the 30S ribosomal subunit. Contacts proteins S9 and S11.

In terms of biological role, one of the primary rRNA binding proteins, it binds directly to 16S rRNA where it nucleates assembly of the head domain of the 30S subunit. Is located at the subunit interface close to the decoding center, probably blocks exit of the E-site tRNA. The sequence is that of Small ribosomal subunit protein uS7 from Buchnera aphidicola subsp. Acyrthosiphon pisum (strain Tuc7).